The following is a 592-amino-acid chain: Arginine--tRNA ligase (592 aa).

Positions 129-139 (ANPTGPLHVGH) match the 'HIGH' region motif.

This sequence belongs to the class-I aminoacyl-tRNA synthetase family. As to quaternary structure, monomer.

It localises to the cytoplasm. The catalysed reaction is tRNA(Arg) + L-arginine + ATP = L-arginyl-tRNA(Arg) + AMP + diphosphate. In Dichelobacter nodosus (strain VCS1703A), this protein is Arginine--tRNA ligase.